Consider the following 193-residue polypeptide: Peptidyl-tRNA hydrolase (193 aa).

Y17 is a tRNA binding site. Catalysis depends on H22, which acts as the Proton acceptor. TRNA is bound by residues Y69, N71, and N117.

The protein belongs to the PTH family. In terms of assembly, monomer.

The protein resides in the cytoplasm. It carries out the reaction an N-acyl-L-alpha-aminoacyl-tRNA + H2O = an N-acyl-L-amino acid + a tRNA + H(+). In terms of biological role, hydrolyzes ribosome-free peptidyl-tRNAs (with 1 or more amino acids incorporated), which drop off the ribosome during protein synthesis, or as a result of ribosome stalling. Its function is as follows. Catalyzes the release of premature peptidyl moieties from peptidyl-tRNA molecules trapped in stalled 50S ribosomal subunits, and thus maintains levels of free tRNAs and 50S ribosomes. The protein is Peptidyl-tRNA hydrolase of Leifsonia xyli subsp. xyli (strain CTCB07).